The following is a 305-amino-acid chain: Methionyl-tRNA formyltransferase (305 aa).

111–114 (SLLP) provides a ligand contact to (6S)-5,6,7,8-tetrahydrofolate.

Belongs to the Fmt family.

The catalysed reaction is L-methionyl-tRNA(fMet) + (6R)-10-formyltetrahydrofolate = N-formyl-L-methionyl-tRNA(fMet) + (6S)-5,6,7,8-tetrahydrofolate + H(+). In terms of biological role, attaches a formyl group to the free amino group of methionyl-tRNA(fMet). The formyl group appears to play a dual role in the initiator identity of N-formylmethionyl-tRNA by promoting its recognition by IF2 and preventing the misappropriation of this tRNA by the elongation apparatus. This is Methionyl-tRNA formyltransferase from Campylobacter jejuni subsp. doylei (strain ATCC BAA-1458 / RM4099 / 269.97).